A 757-amino-acid polypeptide reads, in one-letter code: Relaxin receptor 1 (757 aa).

Residues methionine 1–arginine 409 are Extracellular-facing. In terms of domain architecture, LDL-receptor class A spans lysine 26–glycine 63. 3 disulfide bridges follow: cysteine 27/cysteine 40, cysteine 34/cysteine 53, and cysteine 47/cysteine 62. Asparagine 36 carries N-linked (GlcNAc...) asparagine glycosylation. Residues leucine 45, asparagine 48, valine 50, aspartate 52, aspartate 58, and glutamate 59 each coordinate Ca(2+). Residues glutamate 91–asparagine 127 form the LRRNT domain. Asparagine 127 carries N-linked (GlcNAc...) asparagine glycosylation. 9 LRR repeats span residues aspartate 151–glycine 172, serine 175–aspartate 196, arginine 199–glycine 220, serine 223–glutamine 244, arginine 248–serine 269, asparagine 272–proline 293, lysine 296–aspartate 317, glutamate 320–tyrosine 341, and lysine 344–proline 365. Residues asparagine 264 and asparagine 272 are each glycosylated (N-linked (GlcNAc...) asparagine). A glycan (N-linked (GlcNAc...) asparagine) is linked at asparagine 325. The N-linked (GlcNAc...) asparagine glycan is linked to asparagine 368. A helical transmembrane segment spans residues valine 410–arginine 430. The Cytoplasmic segment spans residues proline 431–serine 443. The chain crosses the membrane as a helical span at residues isoleucine 444–phenylalanine 464. Topologically, residues aspartate 465 to glutamine 486 are extracellular. The cysteines at positions 485 and 563 are disulfide-linked. The helical transmembrane segment at leucine 487–threonine 507 threads the bilayer. Over leucine 508–arginine 527 the chain is Cytoplasmic. Residues threonine 528–serine 548 form a helical membrane-spanning segment. Over asparagine 549 to glutamine 577 the chain is Extracellular. A helical membrane pass occupies residues isoleucine 578–serine 598. Topologically, residues tyrosine 599–arginine 629 are cytoplasmic. The helical transmembrane segment at phenylalanine 630–leucine 650 threads the bilayer. Serine 651 is a topological domain (extracellular). Residues leucine 652–isoleucine 672 traverse the membrane as a helical segment. Residues asparagine 673–serine 757 are Cytoplasmic-facing.

The protein belongs to the G-protein coupled receptor 1 family. Interacts with C1QTNF8. In terms of tissue distribution, expressed in the brain, kidney, testis, placenta, uterus, ovary, adrenal, prostate, skin and heart. Not detected in spleen.

It is found in the cell membrane. Receptor for relaxins. The activity of this receptor is mediated by G proteins leading to stimulation of adenylate cyclase and an increase of cAMP. Binding of the ligand may also activate a tyrosine kinase pathway that inhibits the activity of a phosphodiesterase that degrades cAMP. The polypeptide is Relaxin receptor 1 (RXFP1) (Homo sapiens (Human)).